The primary structure comprises 378 residues: MLAPRRKTRQLMVGSVGVGSDHPISVQSMTTTKTHDINATLQQIAQLTASGCDIVRVACPKPVDAEALPIIAKKSPIPVIADIHFQPKYIFSAIDAGCAAVRVNPGNIKEFDGRVKEVAQAAGDAGIPIRIGVNGGSLDKRILDKYHGKATPEALVESALWEASLFEEHGYGDIAISVKHSDPVLMVEAYRQLAEKCDYPLHLGVTEAGPKFMGTIKSSVAFGALLSQGIGDTIRVSLSADPVEEIKVGDQILQSLNLRPRKLEIVSCPSCGRAQVDVYKLAEEVTEGLDGLEVPLRVAVMGCVVNGPGEARDADLGVASGNGKGQIFVKGEIIKTVPESQIVQTLIEEAMRIAETMDPEVLAAAEASGMKAEVKVTS.

[4Fe-4S] cluster contacts are provided by C268, C271, C303, and E310.

Belongs to the IspG family. [4Fe-4S] cluster serves as cofactor.

It carries out the reaction (2E)-4-hydroxy-3-methylbut-2-enyl diphosphate + oxidized [flavodoxin] + H2O + 2 H(+) = 2-C-methyl-D-erythritol 2,4-cyclic diphosphate + reduced [flavodoxin]. Its pathway is isoprenoid biosynthesis; isopentenyl diphosphate biosynthesis via DXP pathway; isopentenyl diphosphate from 1-deoxy-D-xylulose 5-phosphate: step 5/6. Its function is as follows. Converts 2C-methyl-D-erythritol 2,4-cyclodiphosphate (ME-2,4cPP) into 1-hydroxy-2-methyl-2-(E)-butenyl 4-diphosphate. This is 4-hydroxy-3-methylbut-2-en-1-yl diphosphate synthase (flavodoxin) from Corynebacterium efficiens (strain DSM 44549 / YS-314 / AJ 12310 / JCM 11189 / NBRC 100395).